Here is a 332-residue protein sequence, read N- to C-terminus: Fructose-1,6-bisphosphatase class 1 (332 aa).

Positions 89, 110, 112, and 113 each coordinate Mg(2+). Substrate is bound by residues 113-116 (DGSS), N206, Y239, 257-259 (YLY), and K269. Position 275 (E275) interacts with Mg(2+).

This sequence belongs to the FBPase class 1 family. In terms of assembly, homotetramer. It depends on Mg(2+) as a cofactor.

Its subcellular location is the cytoplasm. The catalysed reaction is beta-D-fructose 1,6-bisphosphate + H2O = beta-D-fructose 6-phosphate + phosphate. It participates in carbohydrate biosynthesis; gluconeogenesis. The polypeptide is Fructose-1,6-bisphosphatase class 1 (Erwinia tasmaniensis (strain DSM 17950 / CFBP 7177 / CIP 109463 / NCPPB 4357 / Et1/99)).